The chain runs to 324 residues: GTPase Era (324 aa).

The Era-type G domain occupies 31–199; that stretch reads KSGFIGIIGR…QELLVEHLEH (169 aa). The interval 39-46 is G1; it reads GRPNVGKS. 39-46 contacts GTP; the sequence is GRPNVGKS. A G2 region spans residues 65–69; it reads QTTRN. The G3 stretch occupies residues 86–89; that stretch reads DTPG. Residues 86–90 and 148–151 contribute to the GTP site; these read DTPGI and NKVD. Residues 148–151 are G4; that stretch reads NKVD. Positions 178 to 180 are G5; the sequence is FSA. One can recognise a KH type-2 domain in the interval 230 to 306; that stretch reads TREEVPHSVA…YLELFVKVQP (77 aa).

Belongs to the TRAFAC class TrmE-Era-EngA-EngB-Septin-like GTPase superfamily. Era GTPase family. As to quaternary structure, monomer.

It is found in the cytoplasm. It localises to the cell inner membrane. Its function is as follows. An essential GTPase that binds both GDP and GTP, with rapid nucleotide exchange. Plays a role in 16S rRNA processing and 30S ribosomal subunit biogenesis and possibly also in cell cycle regulation and energy metabolism. The chain is GTPase Era from Nostoc sp. (strain PCC 7120 / SAG 25.82 / UTEX 2576).